The chain runs to 546 residues: Inosine-5'-monophosphate dehydrogenase (546 aa).

2 CBS domains span residues 135–197 (FILD…VTAI) and 198–254 (MSTD…PLAS). NAD(+) is bound by residues 292–294 (DSS) and 342–344 (GMG). K(+) contacts are provided by glycine 344 and glycine 346. Serine 347 is a binding site for IMP. Cysteine 349 contacts K(+). The active-site Thioimidate intermediate is cysteine 349. IMP-binding positions include 382-384 (DGG), 405-406 (GG), and 430-434 (YRGMG). Catalysis depends on arginine 460, which acts as the Proton acceptor. Residue glutamine 472 coordinates IMP. Residues glutamate 531 and glycine 532 each coordinate K(+).

The protein belongs to the IMPDH/GMPR family. As to quaternary structure, homotetramer. Requires K(+) as cofactor.

The protein localises to the cytoplasm. It carries out the reaction IMP + NAD(+) + H2O = XMP + NADH + H(+). Its pathway is purine metabolism; XMP biosynthesis via de novo pathway; XMP from IMP: step 1/1. Mycophenolic acid (MPA) is a non-competitive inhibitor that prevents formation of the closed enzyme conformation by binding to the same site as the amobile flap. In contrast, mizoribine monophosphate (MZP) is a competitive inhibitor that induces the closed conformation. MPA is a potent inhibitor of mammalian IMPDHs but a poor inhibitor of the bacterial enzymes. MZP is a more potent inhibitor of bacterial IMPDH. Catalyzes the conversion of inosine 5'-phosphate (IMP) to xanthosine 5'-phosphate (XMP), the first committed and rate-limiting step in the de novo synthesis of guanine nucleotides, and therefore plays an important role in the regulation of cell growth. The chain is Inosine-5'-monophosphate dehydrogenase from Aspergillus fumigatus (strain ATCC MYA-4609 / CBS 101355 / FGSC A1100 / Af293) (Neosartorya fumigata).